Here is a 130-residue protein sequence, read N- to C-terminus: T-cell receptor beta chain V region A20.2.25 (130 aa).

A signal peptide spans 1–21 (MSCRLLLYVSLCLVETALMNT). Residues 22–112 (KITQSPRYLI…DSAVYFCASS (91 aa)) form a v segment region. Residues Asn36 and Asn75 are each glycosylated (N-linked (GlcNAc...) asparagine). Residues 113-115 (HGE) are d segment. A j segment region spans residues 116–130 (NTEVFFGKGTTLTVV).

In Mus musculus (Mouse), this protein is T-cell receptor beta chain V region A20.2.25.